The following is a 482-amino-acid chain: Hydrogenase transcriptional regulatory protein HoxA (482 aa).

A Response regulatory domain is found at 7 to 121 (TVLVVDDETR…HLIDTVRQAV (115 aa)). A 4-aspartylphosphate modification is found at Asp-55. The region spanning 167–394 (APGSPLDAVC…LRNEIYRAVA (228 aa)) is the Sigma-54 factor interaction domain. ATP contacts are provided by residues 193-200 (GESGTGKE) and 265-274 (EIGDTSPAFQ). The segment at residues 456 to 475 (KTHAAKELGLSRVGLRQKLL) is a DNA-binding region (H-T-H motif).

The protein localises to the cytoplasm. Functionally, probable member of the two-component regulatory system involved in the regulation of the hydrogenase activity. HoxA is probably phosphorylated by a sensory component (which could be HoxX) and then acts in conjunction with sigma-54 as a transcriptional activator. In Cupriavidus necator (strain ATCC 17699 / DSM 428 / KCTC 22496 / NCIMB 10442 / H16 / Stanier 337) (Ralstonia eutropha), this protein is Hydrogenase transcriptional regulatory protein HoxA (hoxA).